The following is a 499-amino-acid chain: Pyruvate kinase 1 (499 aa).

Position 50 (arginine 50) interacts with substrate. K(+) contacts are provided by asparagine 52, serine 54, aspartate 84, and threonine 85. 52–55 provides a ligand contact to ATP; the sequence is NFSH. Arginine 91 contacts ATP. Glutamate 241 is a binding site for Mg(2+). Substrate is bound by residues glycine 264, aspartate 265, and threonine 297. Aspartate 265 is a Mg(2+) binding site.

The protein belongs to the pyruvate kinase family. As to quaternary structure, homotetramer. It depends on Mg(2+) as a cofactor. The cofactor is K(+).

The catalysed reaction is pyruvate + ATP = phosphoenolpyruvate + ADP + H(+). Its pathway is carbohydrate degradation; glycolysis; pyruvate from D-glyceraldehyde 3-phosphate: step 5/5. Its activity is regulated as follows. Activated by fructose 2,6-bisphosphate, activated by the effector in a cooperative manner. This Trypanosoma brucei brucei protein is Pyruvate kinase 1 (PYK1).